The chain runs to 471 residues: Soluble pyridine nucleotide transhydrogenase (471 aa).

41–50 contacts FAD; sequence EREPSVGGGC.

The protein belongs to the class-I pyridine nucleotide-disulfide oxidoreductase family. FAD serves as cofactor.

The protein resides in the cytoplasm. The catalysed reaction is NAD(+) + NADPH = NADH + NADP(+). Its function is as follows. Conversion of NADPH, generated by peripheral catabolic pathways, to NADH, which can enter the respiratory chain for energy generation. This is Soluble pyridine nucleotide transhydrogenase from Aliivibrio fischeri (strain ATCC 700601 / ES114) (Vibrio fischeri).